The chain runs to 468 residues: E3 ubiquitin-protein ligase TRIM11 (468 aa).

The RING-type zinc finger occupies 16–57 (CAICLDYFTDPVMTDCGHNFCRECIRRCWGQPEGPYACPECR). A Phosphoserine modification is found at Ser-85. The B box-type zinc-finger motif lies at 87–128 (VPQGVCAAHREPLAAFCGDELRLLCAACERSGEHWAHRVRPL). Zn(2+) contacts are provided by Cys-92, His-95, Cys-114, and His-120. A coiled-coil region spans residues 128-233 (LQDAAEDLKS…QLAELITELE (106 aa)). Residues 268–461 (EMRTVCRVPG…MTICRLKGGP (194 aa)) form the B30.2/SPRY domain. Lys-458 participates in a covalent cross-link: Glycyl lysine isopeptide (Lys-Gly) (interchain with G-Cter in ubiquitin).

The protein belongs to the TRIM/RBCC family. In terms of assembly, binds cytoplasmic tail of integrin alpha-1. Interacts with the HN peptide. Interacts with PHOX2B. Interacts (when autoubiquitinated) with SQSTM1/p62; promoting AIM2 recruitment to autophagosomes. Interacts with AIM2; promoting its autophagy-dependent degradation. Post-translationally, autoubiquitinated upon DNA stimulation; autoubiquitination promotes interaction with SQSTM1/p62 and recruitment of AIM2 to autophagosomes.

Its subcellular location is the cytoplasm. It is found in the nucleus. The catalysed reaction is S-ubiquitinyl-[E2 ubiquitin-conjugating enzyme]-L-cysteine + [acceptor protein]-L-lysine = [E2 ubiquitin-conjugating enzyme]-L-cysteine + N(6)-ubiquitinyl-[acceptor protein]-L-lysine.. The protein operates within protein modification; protein ubiquitination. In terms of biological role, E3 ubiquitin-protein ligase that promotes the degradation of insoluble ubiquitinated proteins, including insoluble PAX6, poly-Gln repeat expanded HTT and poly-Ala repeat expanded ARX. Mediates PAX6 ubiquitination leading to proteasomal degradation, thereby modulating cortical neurogenesis. May also inhibit PAX6 transcriptional activity, possibly in part by preventing the binding of PAX6 to its consensus sequences. May contribute to the regulation of the intracellular level of HN (humanin) or HN-containing proteins through the proteasomal degradation pathway. Mediates MED15 ubiquitination leading to proteasomal degradation. May contribute to the innate restriction of retroviruses. Upon overexpression, reduces HIV-1 and murine leukemia virus infectivity, by suppressing viral gene expression. Antiviral activity depends on a functional E3 ubiquitin-protein ligase domain. May regulate TRIM5 turnover via the proteasome pathway, thus counteracting the TRIM5-mediated cross-species restriction of retroviral infection at early stages of the retroviral life cycle. Acts as an inhibitor of the AIM2 inflammasome by promoting autophagy-dependent degradation of AIM2. Mechanistically, undergoes autoubiquitination upon DNA stimulation, promoting interaction with AIM2 and SQSTM1/p62, leading to AIM2 recruitment to autophagosomes. The chain is E3 ubiquitin-protein ligase TRIM11 (TRIM11) from Bos taurus (Bovine).